We begin with the raw amino-acid sequence, 484 residues long: Sucrose-6-phosphate hydrolase (484 aa).

Substrate is bound by residues 48–51 (LLND), Gln-67, 110–111 (YS), 168–169 (RD), and Glu-223. Asp-51 is a catalytic residue.

Belongs to the glycosyl hydrolase 32 family.

The protein resides in the cytoplasm. It catalyses the reaction Hydrolysis of terminal non-reducing beta-D-fructofuranoside residues in beta-D-fructofuranosides.. Its pathway is glycan biosynthesis; sucrose metabolism. Its function is as follows. Enables the bacterium to metabolize sucrose as a sole carbon source. The protein is Sucrose-6-phosphate hydrolase (scrB) of Vibrio alginolyticus.